Reading from the N-terminus, the 298-residue chain is Leucine-rich repeat-containing protein 38 (298 aa).

A signal peptide spans 1–31 (MSLCVAPRHPTGAAAALGLGSLLVLLGPGRA). 2 cysteine pairs are disulfide-bonded: Cys-32-Cys-38 and Cys-36-Cys-46. One can recognise an LRRNT domain in the interval 32–60 (CPAGCACTDPHTVDCRDRGLPSVPDPFPL). The Extracellular segment spans residues 32-251 (CPAGCACTDP…ECKFSLSLTD (220 aa)). 5 LRR repeats span residues 61 to 82 (DVRK…FFIF), 85 to 106 (DLVY…TFSG), 109 to 130 (KLAF…AFRS), 133 to 154 (RLVK…AFES), and 157 to 177 (SLQV…AALD). Asn-119 is a glycosylation site (N-linked (GlcNAc...) asparagine). An LRRCT domain is found at 190–245 (NPWLCDCDFAHLFSWIQENTSKLPKGLDAIQCSLPMEDRRVALRELSEASFSECKF). 2 disulfides stabilise this stretch: Cys-194–Cys-221 and Cys-196–Cys-243. A helical transmembrane segment spans residues 252–272 (LFIIIFSGVAVSIAAIISSFF). The Cytoplasmic portion of the chain corresponds to 273 to 298 (LATVVQCFQRCAPNKDTEDEDDDEDD).

As to quaternary structure, interacts with KCNMA1.

Its subcellular location is the cell membrane. Functionally, auxiliary protein of the large-conductance, voltage and calcium-activated potassium channel (BK alpha). Modulates gating properties by producing a marked shift in the BK channel's voltage dependence of activation in the hyperpolarizing direction, and in the absence of calcium. The chain is Leucine-rich repeat-containing protein 38 (Lrrc38) from Mus musculus (Mouse).